Here is a 1393-residue protein sequence, read N- to C-terminus: DNA-directed RNA polymerase subunit beta' (1393 aa).

Zn(2+)-binding residues include C72, C74, C87, and C90. Mg(2+) is bound by residues D463, D465, and D467. Positions 812, 887, 894, and 897 each coordinate Zn(2+).

The protein belongs to the RNA polymerase beta' chain family. The RNAP catalytic core consists of 2 alpha, 1 beta, 1 beta' and 1 omega subunit. When a sigma factor is associated with the core the holoenzyme is formed, which can initiate transcription. Mg(2+) is required as a cofactor. Requires Zn(2+) as cofactor.

It catalyses the reaction RNA(n) + a ribonucleoside 5'-triphosphate = RNA(n+1) + diphosphate. In terms of biological role, DNA-dependent RNA polymerase catalyzes the transcription of DNA into RNA using the four ribonucleoside triphosphates as substrates. This Chlamydia caviae (strain ATCC VR-813 / DSM 19441 / 03DC25 / GPIC) (Chlamydophila caviae) protein is DNA-directed RNA polymerase subunit beta'.